The primary structure comprises 1215 residues: DNA-directed RNA polymerase subunit beta' (1215 aa).

The Zn(2+) site is built by cysteine 60, cysteine 62, cysteine 75, and cysteine 78. Residues aspartate 450, aspartate 452, and aspartate 454 each contribute to the Mg(2+) site. Zn(2+) contacts are provided by cysteine 818, cysteine 892, cysteine 899, and cysteine 902.

This sequence belongs to the RNA polymerase beta' chain family. The RNAP catalytic core consists of 2 alpha, 1 beta, 1 beta' and 1 omega subunit. When a sigma factor is associated with the core the holoenzyme is formed, which can initiate transcription. Requires Mg(2+) as cofactor. Zn(2+) serves as cofactor.

The catalysed reaction is RNA(n) + a ribonucleoside 5'-triphosphate = RNA(n+1) + diphosphate. In terms of biological role, DNA-dependent RNA polymerase catalyzes the transcription of DNA into RNA using the four ribonucleoside triphosphates as substrates. The polypeptide is DNA-directed RNA polymerase subunit beta' (Streptococcus sanguinis (strain SK36)).